The following is a 265-amino-acid chain: Mlc titration factor A (265 aa).

The Zn(2+) site is built by histidine 111, histidine 148, histidine 152, and glutamate 211.

It belongs to the MtfA family. Monomer in solution. Interacts with Mlc. Requires Zn(2+) as cofactor.

The protein localises to the cytoplasm. Its activity is regulated as follows. Association between Mlc and MtfA may induce structural changes that activate the peptidase activity of MtfA while inactivating the DNA-binding ability of Mlc. The aminopeptidase activity is partially inhibited by metal chelators such as EDTA and phenantroline, but not by inhibitors for serine-, aspartyl-, or cysteine-proteases. Involved in the modulation of the activity of the glucose-phosphotransferase system (glucose-PTS). Interacts with the transcriptional repressor Mlc, preventing its interaction with DNA and leading to the modulation of expression of genes regulated by Mlc, including ptsG, which encodes the PTS system glucose-specific EIICB component. Its function is as follows. Shows zinc-dependent metallopeptidase activity. In vitro, can cleave several artificial substrates. The highest activity is observed for L-alanine fused to 4-nitroanilide (L-alanine-pNA). Shows lower activity towards proline-pNA and valine-pNA. The protein is Mlc titration factor A of Klebsiella pneumoniae subsp. pneumoniae (strain ATCC 700721 / MGH 78578).